A 678-amino-acid polypeptide reads, in one-letter code: Glutamic acid-rich protein (678 aa).

A signal peptide spans methionine 1–lysine 25. Over residues glutamate 56–valine 79 the composition is skewed to basic and acidic residues. Disordered regions lie at residues glutamate 56–glutamate 194, isoleucine 225–asparagine 445, and valine 520–isoleucine 678. Residues proline 80–asparagine 107 are compositionally biased toward polar residues. The span at asparagine 109–lysine 120 shows a compositional bias: basic and acidic residues. 15 tandem repeats follow at residues lysine 120–aspartate 122, lysine 123–glutamate 125, lysine 126–histidine 128, lysine 129–aspartate 131, lysine 132–glutamate 134, lysine 135–glutamate 137, lysine 138–aspartate 140, lysine 141–glutamate 143, lysine 144–aspartate 146, lysine 147–glutamate 149, lysine 150–histidine 152, lysine 153–glutamate 155, lysine 156–histidine 158, lysine 159–aspartate 161, and lysine 162–lysine 164. Residues lysine 120–lysine 164 form a 15 X 3 AA tandem repeats of K-K-[DEHK] region. The span at lysine 121–lysine 165 shows a compositional bias: basic residues. 2 stretches are compositionally biased toward basic and acidic residues: residues threonine 231–glutamate 329 and proline 371–serine 411. A run of 14 repeats spans residues glutamate 372 to glutamate 376, glycine 377 to glutamate 381, glutamate 382 to glutamate 386, glycine 387 to glutamate 391, glycine 392 to glutamate 396, glutamate 397 to glutamate 401, glutamate 402 to lysine 406, glutamate 407 to serine 411, lysine 412 to serine 416, lysine 417 to aspartate 421, lysine 422 to aspartate 426, lysine 427 to lysine 431, lysine 432 to glutamate 436, and lysine 437 to histidine 441. Residues glutamate 372 to serine 416 form a 9 X 5 AA tandem repeats of [EGK]-E-H-K-[EKS] region. Basic residues predominate over residues lysine 412–valine 443. The segment at lysine 417 to histidine 441 is 5 X 5 AA tandem repeats of K-[GAV]-K-[KH]-[DKEH]. Basic and acidic residues predominate over residues alanine 532–valine 565. The segment covering glutamine 566 to glutamate 663 has biased composition (acidic residues). The span at lysine 667–isoleucine 678 shows a compositional bias: basic residues.

This is Glutamic acid-rich protein (GARP) from Plasmodium falciparum (isolate FC27 / Papua New Guinea).